Consider the following 214-residue polypeptide: Ribosomal RNA small subunit methyltransferase G (214 aa).

Residues Gly-78, Leu-83, 129-130 (AE), and Arg-144 contribute to the S-adenosyl-L-methionine site.

This sequence belongs to the methyltransferase superfamily. RNA methyltransferase RsmG family.

Its subcellular location is the cytoplasm. It carries out the reaction guanosine(527) in 16S rRNA + S-adenosyl-L-methionine = N(7)-methylguanosine(527) in 16S rRNA + S-adenosyl-L-homocysteine. Its function is as follows. Specifically methylates the N7 position of guanine in position 527 of 16S rRNA. This Marinobacter nauticus (strain ATCC 700491 / DSM 11845 / VT8) (Marinobacter aquaeolei) protein is Ribosomal RNA small subunit methyltransferase G.